The primary structure comprises 437 residues: Serine carboxypeptidase-like 9 (437 aa).

Residues 1-21 form the signal peptide; the sequence is MSLILKFMLLILLVSSHHVRS. The N-linked (GlcNAc...) asparagine glycan is linked to Asn101. The active site involves Ser175. Intrachain disulfides connect Cys243–Cys257 and Cys281–Cys293. Residues Asn307 and Asn346 are each glycosylated (N-linked (GlcNAc...) asparagine). Asp362 is an active-site residue. An N-linked (GlcNAc...) asparagine glycan is attached at Asn378. Residue His415 is part of the active site.

It belongs to the peptidase S10 family. As to expression, expressed in seedlings, leaves, flowers and siliques.

The protein resides in the secreted. The enzyme catalyses 2 1-O-(trans-sinapoyl)-beta-D-glucose = 1,2-di-O-sinapoyl beta-D-glucose + D-glucose. Catalyzes the formation of 1,2-bis-O-sinapoyl beta-D-glucoside and an unidentified compound 1. In Arabidopsis thaliana (Mouse-ear cress), this protein is Serine carboxypeptidase-like 9 (SCPL9).